Reading from the N-terminus, the 416-residue chain is UDP-N-acetylglucosamine 1-carboxyvinyltransferase (416 aa).

22 to 23 is a binding site for phosphoenolpyruvate; it reads KN. UDP-N-acetyl-alpha-D-glucosamine is bound at residue Arg91. Residue Cys115 is the Proton donor of the active site. At Cys115 the chain carries 2-(S-cysteinyl)pyruvic acid O-phosphothioketal. Residues 120-124, Asp305, and Ile327 each bind UDP-N-acetyl-alpha-D-glucosamine; that span reads RPIDL.

It belongs to the EPSP synthase family. MurA subfamily.

It is found in the cytoplasm. The enzyme catalyses phosphoenolpyruvate + UDP-N-acetyl-alpha-D-glucosamine = UDP-N-acetyl-3-O-(1-carboxyvinyl)-alpha-D-glucosamine + phosphate. Its pathway is cell wall biogenesis; peptidoglycan biosynthesis. In terms of biological role, cell wall formation. Adds enolpyruvyl to UDP-N-acetylglucosamine. This is UDP-N-acetylglucosamine 1-carboxyvinyltransferase from Buchnera aphidicola subsp. Acyrthosiphon pisum (strain Tuc7).